A 911-amino-acid chain; its full sequence is Translation initiation factor IF-2 (911 aa).

2 stretches are compositionally biased toward basic and acidic residues: residues 80-94 (LEEQ…EQQL) and 101-113 (RPER…RTEV). Disordered regions lie at residues 80–142 (LEEQ…VSEP), 153–172 (VKSP…DVEG), and 195–309 (SSLG…KMRK). Residues 214–256 (KEQADELKDEFDIKAKEGGKEREAGGESRKPVKKGSEETKKTT) are compositionally biased toward basic and acidic residues. Positions 262 to 272 (AKKKKGKKKKK) are enriched in basic residues. Residues 273-284 (PEVDEKTIEKNI) are compositionally biased toward basic and acidic residues. Residues 286–300 (STISGMDDTSGSGSS) are compositionally biased toward low complexity. Residues 408–578 (IRPPVVTIMG…LTEAEIRELK (171 aa)) enclose the tr-type G domain. The G1 stretch occupies residues 417–424 (GHVDHGKT). Residue 417-424 (GHVDHGKT) participates in GTP binding. The interval 442-446 (GITQH) is G2. Residues 464 to 467 (DTPG) are G3. GTP is bound by residues 464–468 (DTPGH) and 518–521 (NKID). The interval 518–521 (NKID) is G4. The interval 554-556 (SAK) is G5.

Belongs to the TRAFAC class translation factor GTPase superfamily. Classic translation factor GTPase family. IF-2 subfamily.

The protein resides in the cytoplasm. Its function is as follows. One of the essential components for the initiation of protein synthesis. Protects formylmethionyl-tRNA from spontaneous hydrolysis and promotes its binding to the 30S ribosomal subunits. Also involved in the hydrolysis of GTP during the formation of the 70S ribosomal complex. This is Translation initiation factor IF-2 from Chlorobium phaeobacteroides (strain BS1).